We begin with the raw amino-acid sequence, 417 residues long: Cysteate synthase (417 aa).

The residue at position 102 (Lys-102) is an N6-(pyridoxal phosphate)lysine. Pyridoxal 5'-phosphate contacts are provided by Asn-128 and Thr-380.

The protein belongs to the threonine synthase family. Cysteate synthase subfamily. As to quaternary structure, homotrimer. Requires pyridoxal 5'-phosphate as cofactor.

It carries out the reaction O-phospho-L-serine + sulfite + H(+) = L-cysteate + phosphate. Its pathway is cofactor biosynthesis; coenzyme M biosynthesis. In terms of biological role, specifically catalyzes the beta-elimination of phosphate from L-phosphoserine and the beta-addition of sulfite to the dehydroalanine intermediate to produce L-cysteate. The chain is Cysteate synthase from Methanocella arvoryzae (strain DSM 22066 / NBRC 105507 / MRE50).